Here is a 211-residue protein sequence, read N- to C-terminus: Uracil phosphoribosyltransferase (211 aa).

5-phospho-alpha-D-ribose 1-diphosphate-binding positions include R78, R103, and 130-138 (DPMLATGGT). Uracil is bound by residues I195 and 200-202 (GDA). D201 provides a ligand contact to 5-phospho-alpha-D-ribose 1-diphosphate.

The protein belongs to the UPRTase family. Mg(2+) serves as cofactor.

The catalysed reaction is UMP + diphosphate = 5-phospho-alpha-D-ribose 1-diphosphate + uracil. It participates in pyrimidine metabolism; UMP biosynthesis via salvage pathway; UMP from uracil: step 1/1. Its activity is regulated as follows. Allosterically activated by GTP. Its function is as follows. Catalyzes the conversion of uracil and 5-phospho-alpha-D-ribose 1-diphosphate (PRPP) to UMP and diphosphate. This Kocuria rhizophila (strain ATCC 9341 / DSM 348 / NBRC 103217 / DC2201) protein is Uracil phosphoribosyltransferase.